Reading from the N-terminus, the 175-residue chain is Large ribosomal subunit protein uL10 (175 aa).

The protein belongs to the universal ribosomal protein uL10 family. In terms of assembly, part of the ribosomal stalk of the 50S ribosomal subunit. The N-terminus interacts with L11 and the large rRNA to form the base of the stalk. The C-terminus forms an elongated spine to which L12 dimers bind in a sequential fashion forming a multimeric L10(L12)X complex.

Functionally, forms part of the ribosomal stalk, playing a central role in the interaction of the ribosome with GTP-bound translation factors. The protein is Large ribosomal subunit protein uL10 of Mycolicibacterium smegmatis (strain ATCC 700084 / mc(2)155) (Mycobacterium smegmatis).